The chain runs to 307 residues: Ribosomal protein L11 methyltransferase (307 aa).

S-adenosyl-L-methionine is bound by residues Thr162, Gly183, Asp205, and Asn244.

The protein belongs to the methyltransferase superfamily. PrmA family.

The protein resides in the cytoplasm. The catalysed reaction is L-lysyl-[protein] + 3 S-adenosyl-L-methionine = N(6),N(6),N(6)-trimethyl-L-lysyl-[protein] + 3 S-adenosyl-L-homocysteine + 3 H(+). Functionally, methylates ribosomal protein L11. The sequence is that of Ribosomal protein L11 methyltransferase from Bordetella bronchiseptica (strain ATCC BAA-588 / NCTC 13252 / RB50) (Alcaligenes bronchisepticus).